Here is a 351-residue protein sequence, read N- to C-terminus: uncharacterized protein (351 aa).

The signal sequence occupies residues 1 to 27; that stretch reads MKNKKRVLIASSLSCAILLLSAATTQA. The segment at 29–71 is disordered; sequence SAHKDSQDQNKKEHVDKSQQKDKRNVTNKDKNSTVPDDIGKNG. A compositionally biased stretch (basic and acidic residues) spans 30–60; it reads AHKDSQDQNKKEHVDKSQQKDKRNVTNKDKN.

It belongs to the aerolysin family.

This is an uncharacterized protein from Staphylococcus aureus (strain Mu50 / ATCC 700699).